The sequence spans 267 residues: 4,5-DOPA dioxygenase extradiol (267 aa).

Zn(2+)-binding residues include His9, His47, His168, and His222.

Belongs to the DODA-type extradiol aromatic ring-opening dioxygenase family. Requires Zn(2+) as cofactor. The cofactor is Fe(2+). As to expression, expressed in petals. Not detected in leaves, stems and roots.

It localises to the cytoplasm. The enzyme catalyses L-dopa + O2 = 4-(L-alanin-3-yl)-2-hydroxy-cis,cis-muconate 6-semialdehyde + H(+). It participates in pigment biosynthesis; betalain biosynthesis. Opens the cyclic ring of dihydroxy-phenylalanine (DOPA) between carbons 4 and 5, thus producing an unstable seco-DOPA that rearranges nonenzymatically to betalamic acid. Produces mainly (S)-betalamic acid. Required for the coloration of flowers. The polypeptide is 4,5-DOPA dioxygenase extradiol (DOD) (Mirabilis jalapa (Garden four-o'clock)).